The sequence spans 91 residues: Small ribosomal subunit protein uS19 (91 aa).

Belongs to the universal ribosomal protein uS19 family.

Functionally, protein S19 forms a complex with S13 that binds strongly to the 16S ribosomal RNA. The sequence is that of Small ribosomal subunit protein uS19 from Chromohalobacter salexigens (strain ATCC BAA-138 / DSM 3043 / CIP 106854 / NCIMB 13768 / 1H11).